The chain runs to 305 residues: Membrane glycoprotein UL142 (305 aa).

Positions 1-19 (MRIEWACWLFGYFVSSVGS) are cleaved as a signal peptide. Residues 20 to 270 (ERSLSYRYHL…QKTNNTTSPW (251 aa)) lie on the Lumenal side of the membrane. The chain crosses the membrane as a helical span at residues 271–288 (VYAIPMGATATIGAGLYI). The Cytoplasmic segment spans residues 289–305 (GKHFTPVKFVYEVWRGQ).

In terms of assembly, interacts with host MICA and ULBP3.

The protein resides in the host endoplasmic reticulum membrane. It localises to the host Golgi apparatus membrane. Participates in the inhibition of the host immune response. Prevents host NK cell-mediated lysis of the infected cell by preventing the KLRK1 ligand 3/ULBP3 trafficking to the cell surface. Also retains another KLRK1 ligand, MHC class I-related chain A/MICA, in the Golgi apparatus to avoid its surface expression. The protein is Membrane glycoprotein UL142 (UL142) of Homo sapiens (Human).